Consider the following 151-residue polypeptide: Large ribosomal subunit protein bL9 (151 aa).

Belongs to the bacterial ribosomal protein bL9 family.

Its function is as follows. Binds to the 23S rRNA. The polypeptide is Large ribosomal subunit protein bL9 (Chlorobium luteolum (strain DSM 273 / BCRC 81028 / 2530) (Pelodictyon luteolum)).